The following is a 181-amino-acid chain: Large ribosomal subunit protein uL5c (181 aa).

Belongs to the universal ribosomal protein uL5 family. In terms of assembly, part of the 50S ribosomal subunit; contacts the 5S rRNA.

It is found in the plastid. The protein localises to the chloroplast. In terms of biological role, binds 5S rRNA, forms part of the central protuberance of the 50S subunit. This Rhodomonas salina (Cryptomonas salina) protein is Large ribosomal subunit protein uL5c (rpl5).